A 276-amino-acid polypeptide reads, in one-letter code: Rhomboid protease GlpG (276 aa).

Helical transmembrane passes span 94-114 (GPVTWVMMIACVVVFIAMQIL), 142-162 (ALMHFSLMHILFNLLWWWYLG), 169-189 (LGSGKLIVITLISALLSGYVQ), 192-212 (FSGPWFGGLSGVVYALMGYVW), 229-249 (LIIFALIWIVAGWFDLFGMSM), and 250-270 (ANGAHIAGLAVGLAMAFVDSL). The active-site Nucleophile is the S201. Residue H254 is part of the active site.

Belongs to the peptidase S54 family.

Its subcellular location is the cell inner membrane. The enzyme catalyses Cleaves type-1 transmembrane domains using a catalytic dyad composed of serine and histidine that are contributed by different transmembrane domains.. Its function is as follows. Rhomboid-type serine protease that catalyzes intramembrane proteolysis. The chain is Rhomboid protease GlpG from Escherichia coli O45:K1 (strain S88 / ExPEC).